The primary structure comprises 865 residues: Alanine--tRNA ligase (865 aa).

Residues His-552, His-556, Cys-654, and His-658 each contribute to the Zn(2+) site.

This sequence belongs to the class-II aminoacyl-tRNA synthetase family. Requires Zn(2+) as cofactor.

It localises to the cytoplasm. It catalyses the reaction tRNA(Ala) + L-alanine + ATP = L-alanyl-tRNA(Ala) + AMP + diphosphate. Functionally, catalyzes the attachment of alanine to tRNA(Ala) in a two-step reaction: alanine is first activated by ATP to form Ala-AMP and then transferred to the acceptor end of tRNA(Ala). Also edits incorrectly charged Ser-tRNA(Ala) and Gly-tRNA(Ala) via its editing domain. This chain is Alanine--tRNA ligase, found in Coxiella burnetii (strain Dugway 5J108-111).